A 239-amino-acid polypeptide reads, in one-letter code: 1-(5-phosphoribosyl)-5-[(5-phosphoribosylamino)methylideneamino] imidazole-4-carboxamide isomerase (239 aa).

Asp-8 acts as the Proton acceptor in catalysis. Asp-130 acts as the Proton donor in catalysis.

It belongs to the HisA/HisF family.

It is found in the cytoplasm. The catalysed reaction is 1-(5-phospho-beta-D-ribosyl)-5-[(5-phospho-beta-D-ribosylamino)methylideneamino]imidazole-4-carboxamide = 5-[(5-phospho-1-deoxy-D-ribulos-1-ylimino)methylamino]-1-(5-phospho-beta-D-ribosyl)imidazole-4-carboxamide. Its pathway is amino-acid biosynthesis; L-histidine biosynthesis; L-histidine from 5-phospho-alpha-D-ribose 1-diphosphate: step 4/9. The sequence is that of 1-(5-phosphoribosyl)-5-[(5-phosphoribosylamino)methylideneamino] imidazole-4-carboxamide isomerase from Streptococcus thermophilus (strain ATCC BAA-491 / LMD-9).